Here is a 529-residue protein sequence, read N- to C-terminus: Glycylpeptide N-tetradecanoyltransferase 2 (529 aa).

The segment at 1-82 (MAEDSESAAS…QEIKIQQSSK (82 aa)) is disordered. A compositionally biased stretch (acidic residues) spans 15–32 (ELDDQDTCGIDGDNEEET). At serine 38 the chain carries Phosphoserine. Over residues 46–57 (KKKKKKQKRKKE) the composition is skewed to basic residues. The span at 61-82 (SGGTKSDSASDSQEIKIQQSSK) shows a compositional bias: polar residues. Positions 153, 281, 283, 289, 291, 292, and 293 each coordinate tetradecanoyl-CoA.

This sequence belongs to the NMT family.

Its subcellular location is the cytoplasm. It localises to the membrane. The catalysed reaction is N-terminal glycyl-[protein] + tetradecanoyl-CoA = N-tetradecanoylglycyl-[protein] + CoA + H(+). The enzyme catalyses N-terminal glycyl-L-lysyl-[protein] + tetradecanoyl-CoA = N-terminal glycyl-(N(6)-tetradecanoyl)-L-lysyl-[protein] + CoA + H(+). Functionally, adds a myristoyl group to the N-terminal glycine residue of certain cellular and viral proteins. Also able to mediate N-terminal lysine myristoylation of proteins: catalyzes myristoylation of ARF6 on both 'Gly-2' and 'Lys-3'. Lysine myristoylation is required to maintain ARF6 on membranes during the GTPase cycle. The sequence is that of Glycylpeptide N-tetradecanoyltransferase 2 (Nmt2) from Mus musculus (Mouse).